The chain runs to 755 residues: Probable ubiquitin carboxyl-terminal hydrolase creB (755 aa).

The tract at residues 1-32 is disordered; that stretch reads MGSFLRSLRRDVGPPTPSVGATPAKKEPPVPP. One can recognise a USP domain in the interval 55–468; the sequence is FGMENYGNTC…CAYVLFYQET (414 aa). Cysteine 64 functions as the Nucleophile in the catalytic mechanism. 2 disordered regions span residues 119–146 and 237–270; these read EKQK…DSPE and EASK…TPNT. Residues 237–246 are compositionally biased toward basic and acidic residues; it reads EASKQPEPER. Polar residues predominate over residues 254–270; it reads ADSTELSGSSGSKTPNT. The active-site Proton acceptor is histidine 419. The disordered stretch occupies residues 495–755; the sequence is TLKQNGYPLS…LKKKSFSILS (261 aa). Over residues 547-560 the composition is skewed to low complexity; the sequence is ESSPADPSTTASAT. Basic and acidic residues predominate over residues 577 to 648; sequence KKSDSHFKKE…RRHSPDDTKK (72 aa). Residues 581–630 adopt a coiled-coil conformation; that stretch reads SHFKKERAKEEKERKANEKEKEKQRRRDQEARIREQRREDAEIRAALEAS. The span at 654-666 shows a compositional bias: basic residues; it reads SRLKRGSKSFSHR. A compositionally biased stretch (polar residues) spans 693 to 709; the sequence is NGASESQQQLPNGQSPG. Residues 718–733 show a composition bias toward basic and acidic residues; that stretch reads TGLDEERDTLKDPKHD. Residues 734 to 755 show a composition bias toward basic residues; that stretch reads RSGHHGKWRSFSLKKKSFSILS.

The protein belongs to the peptidase C19 family. In terms of assembly, interacts with creA, creC and qutD.

It catalyses the reaction Thiol-dependent hydrolysis of ester, thioester, amide, peptide and isopeptide bonds formed by the C-terminal Gly of ubiquitin (a 76-residue protein attached to proteins as an intracellular targeting signal).. Ubiquitin thioesterase component of the regulatory network controlling carbon source utilization through ubiquitination and deubiquitination involving creA, creB, creC, creD and acrB. Deubiquitinates the creA catabolic repressor and the quinate permease qutD. Also plays a role in response to carbon starvation and the control of extracellular proteases activity. In Aspergillus flavus (strain ATCC 200026 / FGSC A1120 / IAM 13836 / NRRL 3357 / JCM 12722 / SRRC 167), this protein is Probable ubiquitin carboxyl-terminal hydrolase creB (creB).